The following is a 292-amino-acid chain: uncharacterized protein (292 aa).

Residues 1–19 (MFKKYIFILLLLVTSIVKA) form the signal peptide. The segment at 271–292 (KRNNPPLKTNNAKSKNPYDQSK) is disordered.

This is an uncharacterized protein from Rickettsia bellii (strain RML369-C).